The primary structure comprises 789 residues: Probable Xaa-Pro aminopeptidase SNOG_02267 (789 aa).

Mn(2+) contacts are provided by D240, D251, E375, and E416. 2 disordered regions span residues 607–658 (SMSK…TGLA) and 670–704 (NHVSESPTPSQRRAGGCTPHWRGQNRADQSGDDAL). Over residues 622–637 (VISQKQIRNRRSVSST) the composition is skewed to polar residues. The segment covering 638–650 (ARHDLRGDRERPQ) has biased composition (basic and acidic residues).

It belongs to the peptidase M24B family. Requires Mn(2+) as cofactor.

It carries out the reaction Release of any N-terminal amino acid, including proline, that is linked to proline, even from a dipeptide or tripeptide.. In terms of biological role, catalyzes the removal of a penultimate prolyl residue from the N-termini of peptides. The sequence is that of Probable Xaa-Pro aminopeptidase SNOG_02267 from Phaeosphaeria nodorum (strain SN15 / ATCC MYA-4574 / FGSC 10173) (Glume blotch fungus).